A 165-amino-acid polypeptide reads, in one-letter code: Large ribosomal subunit protein uL10 (165 aa).

Belongs to the universal ribosomal protein uL10 family. As to quaternary structure, part of the ribosomal stalk of the 50S ribosomal subunit. The N-terminus interacts with L11 and the large rRNA to form the base of the stalk. The C-terminus forms an elongated spine to which L12 dimers bind in a sequential fashion forming a multimeric L10(L12)X complex.

In terms of biological role, forms part of the ribosomal stalk, playing a central role in the interaction of the ribosome with GTP-bound translation factors. The protein is Large ribosomal subunit protein uL10 of Shewanella piezotolerans (strain WP3 / JCM 13877).